The sequence spans 130 residues: Large ribosomal subunit protein eL22 (130 aa).

It belongs to the eukaryotic ribosomal protein eL22 family.

This is Large ribosomal subunit protein eL22 (rpl-22) from Caenorhabditis elegans.